The following is a 431-amino-acid chain: tRNA-specific 2-thiouridylase MnmA (431 aa).

ATP contacts are provided by residues 35–42 and L61; that span reads AMSGGVDS. The active-site Nucleophile is C129. An intrachain disulfide couples C129 to C226. G153 is a binding site for ATP. The interval 176–178 is interaction with tRNA; the sequence is RDQ. Catalysis depends on C226, which acts as the Cysteine persulfide intermediate. Positions 407–431 are disordered; that stretch reads PKPPNEDLLDTNESSDLVSPKRSAC.

Belongs to the MnmA/TRMU family.

The protein localises to the cytoplasm. It catalyses the reaction S-sulfanyl-L-cysteinyl-[protein] + uridine(34) in tRNA + AH2 + ATP = 2-thiouridine(34) in tRNA + L-cysteinyl-[protein] + A + AMP + diphosphate + H(+). In terms of biological role, catalyzes the 2-thiolation of uridine at the wobble position (U34) of tRNA, leading to the formation of s(2)U34. This chain is tRNA-specific 2-thiouridylase MnmA, found in Beijerinckia indica subsp. indica (strain ATCC 9039 / DSM 1715 / NCIMB 8712).